Here is a 583-residue protein sequence, read N- to C-terminus: Cationic amino acid transporter 6, chloroplastic (583 aa).

The transit peptide at 1-50 directs the protein to the chloroplast; sequence MEVQSSSNNGGHSSFSSLRVYLNSLSATPSRLSRRAISVSTSSDEMSRVR. Transmembrane regions (helical) follow at residues 63–83, 91–111, 132–152, 186–206, 216–236, 255–275, 294–314, 347–367, 397–417, 418–438, 450–470, 481–501, 509–529, and 541–561; these read WYDL…FVTT, AGPS…LSAF, ITFG…DYVM, GFNE…VIIC, NMIM…MGFI, FFPF…LSYI, IPVG…LMAV, VVGI…MLGQ, ASTF…LNVL, LNLV…ALIF, WPTL…TLIW, FMLG…QCVV, LWGV…NIFL, and FGFF…HASS.

The protein belongs to the amino acid-polyamine-organocation (APC) superfamily. Cationic amino acid transporter (CAT) (TC 2.A.3.3) family. As to expression, expressed in roots, stems, flowers, and leaves.

The protein resides in the plastid. The protein localises to the chloroplast membrane. Functionally, permease involved in the transport of the cationic neutral or acidic amino acids. This Arabidopsis thaliana (Mouse-ear cress) protein is Cationic amino acid transporter 6, chloroplastic (CAT6).